A 260-amino-acid chain; its full sequence is Protein-L-isoaspartate O-methyltransferase (260 aa).

Residues 1 to 27 (MKSPVAGAVLDPSTPPPTTGTSWRWPG) form a disordered region. Residue Ser92 is part of the active site.

It belongs to the methyltransferase superfamily. L-isoaspartyl/D-aspartyl protein methyltransferase family.

It is found in the cytoplasm. It catalyses the reaction [protein]-L-isoaspartate + S-adenosyl-L-methionine = [protein]-L-isoaspartate alpha-methyl ester + S-adenosyl-L-homocysteine. In terms of biological role, catalyzes the methyl esterification of L-isoaspartyl residues in peptides and proteins that result from spontaneous decomposition of normal L-aspartyl and L-asparaginyl residues. It plays a role in the repair and/or degradation of damaged proteins. The protein is Protein-L-isoaspartate O-methyltransferase (pcm) of Aeropyrum pernix (strain ATCC 700893 / DSM 11879 / JCM 9820 / NBRC 100138 / K1).